A 648-amino-acid chain; its full sequence is Biosynthetic arginine decarboxylase (648 aa).

N6-(pyridoxal phosphate)lysine is present on Lys-109. 291-301 lines the substrate pocket; sequence LDVGGGLGVDY.

It belongs to the Orn/Lys/Arg decarboxylase class-II family. SpeA subfamily. Mg(2+) serves as cofactor. Requires pyridoxal 5'-phosphate as cofactor.

It catalyses the reaction L-arginine + H(+) = agmatine + CO2. Functionally, catalyzes the biosynthesis of agmatine from arginine. The chain is Biosynthetic arginine decarboxylase from Prochlorococcus marinus (strain SARG / CCMP1375 / SS120).